A 163-amino-acid polypeptide reads, in one-letter code: Troponin C, skeletal muscle (163 aa).

A Blocked amino end (Ala) modification is found at Ala-2. EF-hand domains follow at residues 18–53, 54–89, 94–129, and 130–163; these read EMIAEFKAAFDMFDADGGGDISTKELGTVMRMLGQN, PTKEELDAIIEEVDEDGSGTIDFEEFLVMMVRQMKE, KSEEELANCFRIFDKNADGFIDIEELGEILRATGEH, and VTEEDIEDLMKDSDKNNDGRIDFDEFLKMMEGVQ. Positions 31, 33, 37, 42, 67, 69, 71, 73, 78, 107, 109, 111, 118, 143, 145, 147, 149, and 154 each coordinate Ca(2+).

Belongs to the troponin C family.

Troponin is the central regulatory protein of striated muscle contraction. Tn consists of three components: Tn-I which is the inhibitor of actomyosin ATPase, Tn-T which contains the binding site for tropomyosin and Tn-C. The binding of calcium to Tn-C abolishes the inhibitory action of Tn on actin filaments. The chain is Troponin C, skeletal muscle (TNNC2) from Gallus gallus (Chicken).